Consider the following 378-residue polypeptide: Succinyl-diaminopimelate desuccinylase (378 aa).

Residue H68 participates in Zn(2+) binding. D70 is a catalytic residue. D102 contacts Zn(2+). E136 (proton acceptor) is an active-site residue. Residues E137, E165, and H351 each coordinate Zn(2+).

Belongs to the peptidase M20A family. DapE subfamily. In terms of assembly, homodimer. Zn(2+) serves as cofactor. Requires Co(2+) as cofactor.

The catalysed reaction is N-succinyl-(2S,6S)-2,6-diaminopimelate + H2O = (2S,6S)-2,6-diaminopimelate + succinate. The protein operates within amino-acid biosynthesis; L-lysine biosynthesis via DAP pathway; LL-2,6-diaminopimelate from (S)-tetrahydrodipicolinate (succinylase route): step 3/3. Functionally, catalyzes the hydrolysis of N-succinyl-L,L-diaminopimelic acid (SDAP), forming succinate and LL-2,6-diaminopimelate (DAP), an intermediate involved in the bacterial biosynthesis of lysine and meso-diaminopimelic acid, an essential component of bacterial cell walls. The protein is Succinyl-diaminopimelate desuccinylase of Pseudomonas syringae pv. syringae.